A 117-amino-acid chain; its full sequence is Hydrogenase maturation factor HypA (117 aa).

Histidine 2 serves as a coordination point for Ni(2+). The Zn(2+) site is built by cysteine 74, cysteine 77, cysteine 91, and cysteine 94.

It belongs to the HypA/HybF family.

Functionally, involved in the maturation of [NiFe] hydrogenases. Required for nickel insertion into the metal center of the hydrogenase. This is Hydrogenase maturation factor HypA from Helicobacter pylori (strain J99 / ATCC 700824) (Campylobacter pylori J99).